Consider the following 221-residue polypeptide: Cytochrome c biogenesis ATP-binding export protein CcmA (221 aa).

In terms of domain architecture, ABC transporter spans 14 to 221 (LACHDVSCLR…FDLLDESHFS (208 aa)). Residue 46–53 (GANGIGKS) participates in ATP binding.

It belongs to the ABC transporter superfamily. CcmA exporter (TC 3.A.1.107) family. As to quaternary structure, the complex is composed of two ATP-binding proteins (CcmA) and two transmembrane proteins (CcmB).

Its subcellular location is the cell inner membrane. The catalysed reaction is heme b(in) + ATP + H2O = heme b(out) + ADP + phosphate + H(+). Functionally, part of the ABC transporter complex CcmAB involved in the biogenesis of c-type cytochromes; once thought to export heme, this seems not to be the case, but its exact role is uncertain. Responsible for energy coupling to the transport system. This is Cytochrome c biogenesis ATP-binding export protein CcmA from Zymomonas mobilis subsp. mobilis (strain ATCC 31821 / ZM4 / CP4).